A 127-amino-acid polypeptide reads, in one-letter code: Single-stranded DNA-binding protein 2 (127 aa).

The SSB domain maps to 4–103 (INKVMLVGRC…ITINTIELLG (100 aa)). The tract at residues 104–127 (SPRKEESTSTSAPNETQAVANANF) is disordered. Positions 111–127 (TSTSAPNETQAVANANF) are enriched in polar residues.

In terms of assembly, homotetramer.

The polypeptide is Single-stranded DNA-binding protein 2 (ssb2) (Nostoc sp. (strain PCC 7120 / SAG 25.82 / UTEX 2576)).